The sequence spans 24 residues: 60 kDa chaperonin, mitochondrial (24 aa).

The protein belongs to the chaperonin (HSP60) family. As to quaternary structure, forms a single seven-member ring complex, in tight association with the p63 protein. As to expression, testis.

It is found in the mitochondrion. Implicated in mitochondrial protein import and macromolecular assembly. May facilitate the correct folding of imported proteins. May also prevent misfolding and promote the refolding and proper assembly of unfolded polypeptides generated under stress conditions in the mitochondrial matrix. The chain is 60 kDa chaperonin, mitochondrial from Heliothis virescens (Tobacco budworm moth).